A 336-amino-acid polypeptide reads, in one-letter code: Polyprenyl transferase dpasC (336 aa).

The helical transmembrane segment at 34–54 (LFTIFAGGMFLFVASFPTTAF) threads the bilayer. N-linked (GlcNAc...) asparagine glycosylation occurs at asparagine 66. 7 consecutive transmembrane segments (helical) span residues 80–100 (ALCL…NDWI), 125–145 (QAML…HFML), 181–201 (YILG…IFHG), 205–225 (FAES…WTIF), 253–273 (HVHL…PMYL), 274–294 (NQFH…LSLL), and 311–331 (LHVD…IELL).

It belongs to the UbiA prenyltransferase family. It depends on Mg(2+) as a cofactor.

The protein localises to the membrane. The protein operates within secondary metabolite biosynthesis; terpenoid biosynthesis. In terms of biological role, polyprenyl transferase; part of the gene cluster that mediates the biosynthesis of the diterpenoid pyrones subglutinols A and B. The first step of the pathway is the synthesis of the alpha-pyrone moiety by the polyketide synthase dpasA via condensation of one acetyl-CoA starter unit with 3 malonyl-CoA units and 2 methylations. The alpha-pyrone is then combined with geranylgeranyl pyrophosphate (GGPP) formed by the GGPP synthase dpasD through the action of the prenyltransferase dpasC to yield a linear alpha-pyrone diterpenoid. Subsequent steps in the diterpenoid pyrone biosynthetic pathway involve the decalin core formation, which is initiated by the epoxidation of the C10-C11 olefin by the FAD-dependent oxidoreductase dpasE, and is followed by a cyclization cascade catalyzed by the terpene cyclase dpasB. The FAD-linked oxidoreductase dpasF is then involved in tetrahydrofuran (THF) ring formation at the C5 unit to complete the formation of subglutinols A and B. DpasF possesses also an additional catalytic ability of multi-step oxidations to generate a new DDP analog with an enone system at the C5 named FDDP A. The protein is Polyprenyl transferase dpasC of Apiospora sacchari (Arthrinium sacchari).